Reading from the N-terminus, the 101-residue chain is Ubiquitin-related modifier 1 (101 aa).

At Gly101 the chain carries 1-thioglycine. A Glycyl lysine isopeptide (Gly-Lys) (interchain with K-? in acceptor proteins) cross-link involves residue Gly101.

It belongs to the URM1 family. Post-translationally, C-terminal thiocarboxylation occurs in 2 steps, it is first acyl-adenylated (-COAMP) via the hesA/moeB/thiF part of UBA4, then thiocarboxylated (-COSH) via the rhodanese domain of UBA4.

The protein localises to the cytoplasm. It functions in the pathway tRNA modification; 5-methoxycarbonylmethyl-2-thiouridine-tRNA biosynthesis. Functionally, acts as a sulfur carrier required for 2-thiolation of mcm(5)S(2)U at tRNA wobble positions of cytosolic tRNA(Lys), tRNA(Glu) and tRNA(Gln). Serves as sulfur donor in tRNA 2-thiolation reaction by being thiocarboxylated (-COSH) at its C-terminus by the MOCS3 homolog UBA4. The sulfur is then transferred to tRNA to form 2-thiolation of mcm(5)S(2)U. Prior mcm(5) tRNA modification by the elongator complex is required for 2-thiolation. Also acts as a ubiquitin-like protein (UBL) that is covalently conjugated via an isopeptide bond to lysine residues of target proteins such as AHP1. The thiocarboxylated form serves as substrate for conjugation and oxidative stress specifically induces the formation of UBL-protein conjugates. The sequence is that of Ubiquitin-related modifier 1 from Kluyveromyces lactis (strain ATCC 8585 / CBS 2359 / DSM 70799 / NBRC 1267 / NRRL Y-1140 / WM37) (Yeast).